The primary structure comprises 655 residues: p-hydroxybenzoic acid efflux pump subunit AaeB (655 aa).

The next 11 membrane-spanning stretches (helical) occupy residues 13 to 33 (FAVKLACAIVLALFIGFHFQL), 38 to 58 (WAVLTAAIVAAGPAFAAGGEP), 69 to 89 (LRIIGTFIGCIAALIIIISMI), 93 to 113 (LLMILVCCVWAGFCTWISSLV), 121 to 141 (WGLSGYTALIIVITIQTEPLL), 152 to 172 (EIVIGIGCAILADLLFSPRSI), 370 to 390 (LFWLWTGWTSGNGAMVMIAVV), 407 to 427 (FIYGTLAALPLGLLYFLVIIP), 431 to 451 (QSMLLLCLSLAVLGFFIGIEV), 459 to 479 (MGALASTINIIVLDNPMTFHF), and 482 to 502 (FLDSALGQIVGCMLAFIVILL).

Belongs to the aromatic acid exporter ArAE (TC 2.A.85) family.

Its subcellular location is the cell inner membrane. Functionally, forms an efflux pump with AaeA. Could function as a metabolic relief valve, allowing to eliminate certain compounds when they accumulate to high levels in the cell. This is p-hydroxybenzoic acid efflux pump subunit AaeB from Salmonella arizonae (strain ATCC BAA-731 / CDC346-86 / RSK2980).